A 72-amino-acid polypeptide reads, in one-letter code: Bowman-Birk type trypsin inhibitor (72 aa).

7 disulfides stabilise this stretch: C12–C66, C13–C28, C16–C62, C18–C26, C36–C43, C40–C55, and C45–C53.

The protein belongs to the Bowman-Birk serine protease inhibitor family.

This chain is Bowman-Birk type trypsin inhibitor, found in Vigna radiata var. radiata (Mung bean).